A 454-amino-acid polypeptide reads, in one-letter code: Phosphoglucosamine mutase (454 aa).

Catalysis depends on serine 104, which acts as the Phosphoserine intermediate. Positions 104, 241, 243, and 245 each coordinate Mg(2+). Serine 104 is modified (phosphoserine).

The protein belongs to the phosphohexose mutase family. The cofactor is Mg(2+). Activated by phosphorylation.

The enzyme catalyses alpha-D-glucosamine 1-phosphate = D-glucosamine 6-phosphate. Functionally, catalyzes the conversion of glucosamine-6-phosphate to glucosamine-1-phosphate. The chain is Phosphoglucosamine mutase from Paenarthrobacter aurescens (strain TC1).